Here is a 324-residue protein sequence, read N- to C-terminus: Rho crystallin (324 aa).

T2 carries the N-acetylthreonine modification. 218 to 281 (SVLGSHRDRN…SFTPARIKQN (64 aa)) contacts NADP(+).

The protein belongs to the aldo/keto reductase family. Monomer.

In Rana temporaria (European common frog), this protein is Rho crystallin.